The sequence spans 488 residues: Protein nucleotidyltransferase YdiU (488 aa).

ATP is bound by residues G91, G93, R94, K114, D126, G127, R177, and R184. D253 functions as the Proton acceptor in the catalytic mechanism. Positions 254 and 263 each coordinate Mg(2+). D263 serves as a coordination point for ATP.

This sequence belongs to the SELO family. The cofactor is Mg(2+). Mn(2+) serves as cofactor.

The catalysed reaction is L-seryl-[protein] + ATP = 3-O-(5'-adenylyl)-L-seryl-[protein] + diphosphate. The enzyme catalyses L-threonyl-[protein] + ATP = 3-O-(5'-adenylyl)-L-threonyl-[protein] + diphosphate. It carries out the reaction L-tyrosyl-[protein] + ATP = O-(5'-adenylyl)-L-tyrosyl-[protein] + diphosphate. It catalyses the reaction L-histidyl-[protein] + UTP = N(tele)-(5'-uridylyl)-L-histidyl-[protein] + diphosphate. The catalysed reaction is L-seryl-[protein] + UTP = O-(5'-uridylyl)-L-seryl-[protein] + diphosphate. The enzyme catalyses L-tyrosyl-[protein] + UTP = O-(5'-uridylyl)-L-tyrosyl-[protein] + diphosphate. Functionally, nucleotidyltransferase involved in the post-translational modification of proteins. It can catalyze the addition of adenosine monophosphate (AMP) or uridine monophosphate (UMP) to a protein, resulting in modifications known as AMPylation and UMPylation. This is Protein nucleotidyltransferase YdiU from Bacillus cereus (strain G9842).